Reading from the N-terminus, the 233-residue chain is Histone H1-I (233 aa).

Disordered stretches follow at residues 1–55 (MSDS…HPPV) and 115–233 (TGAS…KKSK). Residues 17-29 (KAASPAKSPAKSP) show a composition bias toward low complexity. Positions 51 to 125 (THPPVSEMVV…GASGSFKMPP (75 aa)) constitute an H15 domain. Basic and acidic residues-rich tracts occupy residues 128–137 (KKVDRPESAP) and 146–155 (TRVERKEKKV). Composition is skewed to basic residues over residues 172-213 (AAKK…KPTP) and 223-233 (AAARKPAKKSK).

This sequence belongs to the histone H1/H5 family.

Its subcellular location is the nucleus. The protein localises to the chromosome. In terms of biological role, histones H1 are necessary for the condensation of nucleosome chains into higher-order structures. This chain is Histone H1-I, found in Glyptotendipes barbipes (Midge).